The following is a 990-amino-acid chain: TonB-dependent receptor P26 (990 aa).

The TonB box signature appears at 86–93; the sequence is DEVVVIGY. One can recognise a TBDR plug domain in the interval 97-213; that stretch reads RKSDLTGSVS…ANGVVLVTTK (117 aa). The 771-residue stretch at 220 to 990 folds into the TBDR beta-barrel domain; it reads SSKPEVSANI…TITLGLNVTF (771 aa). The tract at residues 878–902 is disordered; sequence TPENPTSDIPRAGGDSVTGTPPNSA. The TonB C-terminal box motif lies at 974 to 990; that stretch reads GSYPNPRTITLGLNVTF.

It belongs to the TonB-dependent receptor family.

It is found in the cell outer membrane. In terms of biological role, tonB-dependent receptor probably involved in ulvan degradation. Ulvan is the main polysaccharide component of the Ulvales (green seaweed) cell wall. It is composed of disaccharide building blocks comprising 3-sulfated rhamnose (Rha3S) linked to D-glucuronic acid (GlcA), L-iduronic acid (IduA), or D-xylose (Xyl). The TonB-dependent receptor may mediate transport of ulvan oligosaccharides from the surface of the outer membrane to the periplasm for subsequent degradation. This chain is TonB-dependent receptor P26, found in Formosa agariphila (strain DSM 15362 / KCTC 12365 / LMG 23005 / KMM 3901 / M-2Alg 35-1).